Reading from the N-terminus, the 244-residue chain is Ribonuclease 3 (244 aa).

Residues 17–146 (FEKKMQELNL…FVGALYLDQG (130 aa)) form the RNase III domain. Position 59 (E59) interacts with Mg(2+). Residue D63 is part of the active site. Positions 132 and 135 each coordinate Mg(2+). The active site involves E135. The DRBM domain occupies 172-241 (DFKTQFQEYV…AERAYKILKN (70 aa)).

The protein belongs to the ribonuclease III family. Homodimer. It depends on Mg(2+) as a cofactor.

It localises to the cytoplasm. The catalysed reaction is Endonucleolytic cleavage to 5'-phosphomonoester.. Digests double-stranded RNA. Involved in the processing of primary rRNA transcript to yield the immediate precursors to the large and small rRNAs (23S and 16S). Processes some mRNAs, and tRNAs when they are encoded in the rRNA operon. Processes pre-crRNA and tracrRNA of type II CRISPR loci if present in the organism. The protein is Ribonuclease 3 of Staphylococcus saprophyticus subsp. saprophyticus (strain ATCC 15305 / DSM 20229 / NCIMB 8711 / NCTC 7292 / S-41).